A 367-amino-acid polypeptide reads, in one-letter code: HTH-type transcriptional regulator GbdR (367 aa).

The 99-residue stretch at 227–325 (QEIVALMEAN…GIPPRDERQG (99 aa)) folds into the HTH araC/xylS-type domain. 2 consecutive DNA-binding regions (H-T-H motif) follow at residues 244–265 (DELA…QKYL) and 292–315 (IIEV…REYF).

Its function is as follows. Specific regulator of choline metabolism, which activates transcription of at least 25 genes from 11 promoters in response to choline metabolites. Required for the induction of plcH, encoding the phospholipase C, and pchP, encoding the phosphorylcholine phosphatase, in response to glycine betaine (GB) and dimethylglycine (DMG). Also controls the expression of gbcAB and dgcAB, which are required for GB and DMG degradation, respectively, in response to both GB and DMG. The GbdR regulon also includes genes encoding sarcosine, glycine and serine catabolic enzymes, the BetX and CbcXWV quaternary amine transport proteins and the acetylcholine esterase gene, choE. Acts by binding directly to the promoter region of the genes. May play an important role during P.aeruginosa interactions with eukaryotes. This is HTH-type transcriptional regulator GbdR from Pseudomonas aeruginosa (strain UCBPP-PA14).